Consider the following 414-residue polypeptide: Serine hydroxymethyltransferase (414 aa).

(6S)-5,6,7,8-tetrahydrofolate is bound by residues L121 and 125–127 (GHL). K229 bears the N6-(pyridoxal phosphate)lysine mark.

Belongs to the SHMT family. As to quaternary structure, homodimer. Requires pyridoxal 5'-phosphate as cofactor.

Its subcellular location is the cytoplasm. The enzyme catalyses (6R)-5,10-methylene-5,6,7,8-tetrahydrofolate + glycine + H2O = (6S)-5,6,7,8-tetrahydrofolate + L-serine. The protein operates within one-carbon metabolism; tetrahydrofolate interconversion. Its pathway is amino-acid biosynthesis; glycine biosynthesis; glycine from L-serine: step 1/1. Catalyzes the reversible interconversion of serine and glycine with tetrahydrofolate (THF) serving as the one-carbon carrier. This reaction serves as the major source of one-carbon groups required for the biosynthesis of purines, thymidylate, methionine, and other important biomolecules. Also exhibits THF-independent aldolase activity toward beta-hydroxyamino acids, producing glycine and aldehydes, via a retro-aldol mechanism. This Polaromonas naphthalenivorans (strain CJ2) protein is Serine hydroxymethyltransferase.